The sequence spans 240 residues: Allene oxide cyclase, chloroplastic (240 aa).

A chloroplast-targeting transit peptide spans 1 to 49; it reads MAAAAPSRVSVRAAAPGQTGGFAKIRPQVVVAAAARSAGVSGRRARSVR.

This sequence belongs to the allene oxide cyclase family.

It is found in the plastid. The protein localises to the chloroplast. The catalysed reaction is (9Z,13S,15Z)-12,13-epoxyoctadeca-9,11,15-trienoate = (9S,13S,15Z)-12-oxophyto-10,15-dienoate. Its pathway is lipid metabolism; polyunsaturated fatty acid biosynthesis. Functionally, involved in the production of 12-oxo-phytodienoic acid (OPDA), a precursor of jasmonic acid (JA). Required for the production of JA in response to wounding. Necessary for flower and coleoptile development regulation by light, including blue (BL), red (RL) and far red (FR) lights. Involved in the auxin-mediated signaling pathway leading to growth stimulation. Essential for photodestruction of phyA upon activation by RL and FR. Implicated in responses to salt stress (NaCl). In terms of biological role, confers resistance to incompatible strains of the blast fungus Magnaporthe grisea, jasmonic acid (JA) thus playing a significant role in the resistance to fungal infection. Implicated in riboflavin-induced resistance to the sheath blight Rhizoctonia solani. Required for Pseudomonas fluorescens-mediated JA-dependent induced systemic resistance (ISR). Confers some resistance, independently of the JA pathway but probably via OPDA accumulation, to brown planthopper (BPH, Nilaparvata lugens), a destructive, monophagous, piercing-sucking insect, mainly by reducing its feeding activity and survival rate. Triggers resistance to the chewing insect striped stem borer (SSB) Chilo suppressalis, to the root hemiparasite witchweed Striga hermonthica, and to the root feeder insect rice water weevil Lissorhoptrus oryzophilus, in a JA-dependent manner, by attenuating both the growth mass and growth rate of caterpillars. The sequence is that of Allene oxide cyclase, chloroplastic from Oryza sativa subsp. indica (Rice).